Here is a 450-residue protein sequence, read N- to C-terminus: F-box protein KIB3 (450 aa).

In terms of domain architecture, F-box spans 20–50 (DLVRLILERLSFVDFHRARCVSSTWYVASKS).

Its subcellular location is the cytoplasm. The protein localises to the nucleus. The protein resides in the nucleolus. In terms of biological role, component of SCF(ASK-cullin-F-box) E3 ubiquitin ligase complexes, which may mediate the ubiquitination and subsequent proteasomal degradation of target proteins. Required for brassinosteroid (BR) signal transduction. Mediates ASK7/BIN2/SK21 inactivation both by competing with substrate binding (e.g. BZR1) and by promoting its ubiquitination and subsequent proteasomal degradation. The sequence is that of F-box protein KIB3 from Arabidopsis thaliana (Mouse-ear cress).